Reading from the N-terminus, the 459-residue chain is Pentatricopeptide repeat-containing protein At5g18390, mitochondrial (459 aa).

The transit peptide at 1–7 (MLLLRRY) directs the protein to the mitochondrion. PPR repeat units lie at residues 110–144 (TSME…SLDI), 145–175 (SGET…VPKT), 181–215 (TVDV…GLKP), 216–250 (DKRT…GFNP), 251–285 (PARG…GFVP), 286–320 (DIQT…GLCV), 321–355 (DIDT…GHKP), 356–390 (FPSL…AHPP), and 391–425 (NRPV…GLVP).

Belongs to the PPR family. P subfamily.

Its subcellular location is the mitochondrion. The protein is Pentatricopeptide repeat-containing protein At5g18390, mitochondrial of Arabidopsis thaliana (Mouse-ear cress).